The following is a 544-amino-acid chain: Chaperonin GroEL (544 aa).

ATP contacts are provided by residues 29–32 (TLGP), K50, 86–90 (DGTTT), G413, 479–481 (DAA), and D495.

It belongs to the chaperonin (HSP60) family. As to quaternary structure, forms a cylinder of 14 subunits composed of two heptameric rings stacked back-to-back. Interacts with the co-chaperonin GroES.

It localises to the cytoplasm. It catalyses the reaction ATP + H2O + a folded polypeptide = ADP + phosphate + an unfolded polypeptide.. Together with its co-chaperonin GroES, plays an essential role in assisting protein folding. The GroEL-GroES system forms a nano-cage that allows encapsulation of the non-native substrate proteins and provides a physical environment optimized to promote and accelerate protein folding. The polypeptide is Chaperonin GroEL (Borrelia turicatae (strain 91E135)).